A 147-amino-acid chain; its full sequence is Chorion class B protein B.L1 (147 aa).

Positions 1–38 are left arm; the sequence is IGCGRGCGGRGYGGLGYGGLGYGGLGYGGLGGGCGRGF. A run of 4 repeats spans residues 11–15, 16–20, 21–25, and 26–30. Positions 11-30 are 4 X 5 AA tandem repeats of G-Y-G-G-L; the sequence is GYGGLGYGGLGYGGLGYGGL. The central domain stretch occupies residues 39-107; sequence SGGGLPVATA…GNGAVGITRE (69 aa). The interval 108-147 is right arm (Gly-rich tandem repeats); sequence GGLGYGAGYGGGYGLGYGGYGGGYGLGYGGYGGCGCGCGY.

Belongs to the chorion protein family.

In terms of biological role, this protein is one of many from the eggshell of the silk moth. The chain is Chorion class B protein B.L1 from Bombyx mori (Silk moth).